The sequence spans 406 residues: Bifunctional enzyme IspD/IspF (406 aa).

The 2-C-methyl-D-erythritol 4-phosphate cytidylyltransferase stretch occupies residues 1 to 246; it reads MTQMHSTQPM…KLSAGLLPDV (246 aa). A 2-C-methyl-D-erythritol 2,4-cyclodiphosphate synthase region spans residues 247 to 406; sequence RTGNGYDVHQ…ATVVYRGGRP (160 aa). A divalent metal cation-binding residues include Asp-253 and His-255. Residues 253–255 and 279–280 each bind 4-CDP-2-C-methyl-D-erythritol 2-phosphate; these read DVH and HS. His-287 is an a divalent metal cation binding site. 4-CDP-2-C-methyl-D-erythritol 2-phosphate is bound by residues 301 to 303, 377 to 380, Phe-384, and Arg-387; these read DIG and TTNE.

The protein in the N-terminal section; belongs to the IspD/TarI cytidylyltransferase family. IspD subfamily. This sequence in the C-terminal section; belongs to the IspF family. It depends on a divalent metal cation as a cofactor.

The enzyme catalyses 2-C-methyl-D-erythritol 4-phosphate + CTP + H(+) = 4-CDP-2-C-methyl-D-erythritol + diphosphate. The catalysed reaction is 4-CDP-2-C-methyl-D-erythritol 2-phosphate = 2-C-methyl-D-erythritol 2,4-cyclic diphosphate + CMP. Its pathway is isoprenoid biosynthesis; isopentenyl diphosphate biosynthesis via DXP pathway; isopentenyl diphosphate from 1-deoxy-D-xylulose 5-phosphate: step 2/6. The protein operates within isoprenoid biosynthesis; isopentenyl diphosphate biosynthesis via DXP pathway; isopentenyl diphosphate from 1-deoxy-D-xylulose 5-phosphate: step 4/6. Bifunctional enzyme that catalyzes the formation of 4-diphosphocytidyl-2-C-methyl-D-erythritol from CTP and 2-C-methyl-D-erythritol 4-phosphate (MEP) (IspD), and catalyzes the conversion of 4-diphosphocytidyl-2-C-methyl-D-erythritol 2-phosphate (CDP-ME2P) to 2-C-methyl-D-erythritol 2,4-cyclodiphosphate (ME-CPP) with a corresponding release of cytidine 5-monophosphate (CMP) (IspF). The sequence is that of Bifunctional enzyme IspD/IspF from Rhizobium rhizogenes (strain K84 / ATCC BAA-868) (Agrobacterium radiobacter).